Here is a 271-residue protein sequence, read N- to C-terminus: Ribosomal RNA small subunit methyltransferase A (271 aa).

6 residues coordinate S-adenosyl-L-methionine: histidine 11, leucine 13, glycine 38, glutamate 58, aspartate 86, and asparagine 101.

This sequence belongs to the class I-like SAM-binding methyltransferase superfamily. rRNA adenine N(6)-methyltransferase family. RsmA subfamily.

The protein resides in the cytoplasm. The enzyme catalyses adenosine(1518)/adenosine(1519) in 16S rRNA + 4 S-adenosyl-L-methionine = N(6)-dimethyladenosine(1518)/N(6)-dimethyladenosine(1519) in 16S rRNA + 4 S-adenosyl-L-homocysteine + 4 H(+). Specifically dimethylates two adjacent adenosines (A1518 and A1519) in the loop of a conserved hairpin near the 3'-end of 16S rRNA in the 30S particle. May play a critical role in biogenesis of 30S subunits. In Helicobacter pylori (strain Shi470), this protein is Ribosomal RNA small subunit methyltransferase A.